The sequence spans 143 residues: Ribonuclease H (143 aa).

In terms of domain architecture, RNase H type-1 spans 1–136 (MQEIEIFCDG…CDSLAKLEAQ (136 aa)). Residues D9, E47, D69, and D128 each contribute to the Mg(2+) site.

The protein belongs to the RNase H family. Monomer. Mg(2+) serves as cofactor.

Its subcellular location is the cytoplasm. The enzyme catalyses Endonucleolytic cleavage to 5'-phosphomonoester.. Its function is as follows. Endonuclease that specifically degrades the RNA of RNA-DNA hybrids. The chain is Ribonuclease H from Helicobacter pylori (strain HPAG1).